The primary structure comprises 260 residues: 5'-nucleotidase SurE (260 aa).

Residues Asp19, Asp20, Ser51, and Asn104 each coordinate a divalent metal cation.

This sequence belongs to the SurE nucleotidase family. The cofactor is a divalent metal cation.

The protein localises to the cytoplasm. The catalysed reaction is a ribonucleoside 5'-phosphate + H2O = a ribonucleoside + phosphate. Nucleotidase that shows phosphatase activity on nucleoside 5'-monophosphates. This is 5'-nucleotidase SurE from Paramagnetospirillum magneticum (strain ATCC 700264 / AMB-1) (Magnetospirillum magneticum).